The chain runs to 319 residues: Probable NAD(P)H-dependent D-xylose reductase xyl1 (319 aa).

The N-linked (GlcNAc...) asparagine glycan is linked to Asn26. Residue Tyr50 is the Proton donor of the active site. His112 contributes to the substrate binding site. N-linked (GlcNAc...) asparagine glycosylation is found at Asn141 and Asn167. Residues 166–167 (SN), 215–224 (SSFGPLSFLE), and 271–281 (KSNNPQRLKQN) each bind NAD(+).

It belongs to the aldo/keto reductase family.

It catalyses the reaction xylitol + NAD(+) = D-xylose + NADH + H(+). The catalysed reaction is xylitol + NADP(+) = D-xylose + NADPH + H(+). It participates in carbohydrate metabolism; D-xylose degradation. Catalyzes the initial reaction in the xylose utilization pathway by reducing D-xylose into xylitol. Xylose is a major component of hemicelluloses such as xylan. Most fungi utilize D-xylose via three enzymatic reactions, xylose reductase (XR), xylitol dehydrogenase (XDH), and xylulokinase, to form xylulose 5-phosphate, which enters pentose phosphate pathway. The chain is Probable NAD(P)H-dependent D-xylose reductase xyl1 (xyl1) from Aspergillus niger (strain ATCC MYA-4892 / CBS 513.88 / FGSC A1513).